Consider the following 295-residue polypeptide: Accessory protein VasW (295 aa).

Plays an accessory role in VasX-mediated bacterial killing. The protein is Accessory protein VasW of Vibrio cholerae serotype O1 (strain ATCC 39315 / El Tor Inaba N16961).